Consider the following 845-residue polypeptide: Beta-glucosidase (845 aa).

A glycan (N-linked (GlcNAc...) asparagine) is linked at Asn66. Residue Asp225 is part of the active site. 3 N-linked (GlcNAc...) asparagine glycosylation sites follow: Asn304, Asn438, and Asn621. In terms of domain architecture, PA14 spans 408–568; it reads AENAGLIAKF…DDDEEIRNAA (161 aa).

This sequence belongs to the glycosyl hydrolase 3 family. In terms of assembly, homotetramer.

It catalyses the reaction Hydrolysis of terminal, non-reducing beta-D-glucosyl residues with release of beta-D-glucose.. It functions in the pathway glycan metabolism; cellulose degradation. The polypeptide is Beta-glucosidase (Kluyveromyces marxianus (Yeast)).